The sequence spans 873 residues: DNA mismatch repair protein MutS (873 aa).

Glycine 625–serine 632 lines the ATP pocket.

This sequence belongs to the DNA mismatch repair MutS family.

In terms of biological role, this protein is involved in the repair of mismatches in DNA. It is possible that it carries out the mismatch recognition step. This protein has a weak ATPase activity. The sequence is that of DNA mismatch repair protein MutS from Xanthomonas euvesicatoria pv. vesicatoria (strain 85-10) (Xanthomonas campestris pv. vesicatoria).